A 210-amino-acid polypeptide reads, in one-letter code: Leucyl/phenylalanyl-tRNA--protein transferase (210 aa).

This sequence belongs to the L/F-transferase family.

It localises to the cytoplasm. The enzyme catalyses N-terminal L-lysyl-[protein] + L-leucyl-tRNA(Leu) = N-terminal L-leucyl-L-lysyl-[protein] + tRNA(Leu) + H(+). The catalysed reaction is N-terminal L-arginyl-[protein] + L-leucyl-tRNA(Leu) = N-terminal L-leucyl-L-arginyl-[protein] + tRNA(Leu) + H(+). It catalyses the reaction L-phenylalanyl-tRNA(Phe) + an N-terminal L-alpha-aminoacyl-[protein] = an N-terminal L-phenylalanyl-L-alpha-aminoacyl-[protein] + tRNA(Phe). Functions in the N-end rule pathway of protein degradation where it conjugates Leu, Phe and, less efficiently, Met from aminoacyl-tRNAs to the N-termini of proteins containing an N-terminal arginine or lysine. The chain is Leucyl/phenylalanyl-tRNA--protein transferase from Ruegeria pomeroyi (strain ATCC 700808 / DSM 15171 / DSS-3) (Silicibacter pomeroyi).